The following is a 192-amino-acid chain: Cytochrome b-245 light chain (192 aa).

At 2 to 7 the chain is on the cytoplasmic side; it reads GQIEWA. Residues 8 to 30 traverse the membrane as a helical segment; sequence MWANEQALASGLILMTGGIVATA. Topologically, residues 31–35 are extracellular; the sequence is GQFTQ. The chain crosses the membrane as a helical span at residues 36–53; that stretch reads WYLGTYSIAAGVLVCLLE. Topologically, residues 54–69 are cytoplasmic; sequence YPRGRRTKGSTMERCE. The stretch at 70 to 80 is an intramembrane region; the sequence is QKYMTKVVKAF. Residues 81–86 are Cytoplasmic-facing; that stretch reads GPLSRN. A helical transmembrane segment spans residues 87–104; sequence YYIRAFLHLGLSVPAGFL. L105 is a topological domain (extracellular). Residues 106–126 form a helical membrane-spanning segment; sequence ATILGTACLAIASGIYLLAAI. Residues 127–192 are Cytoplasmic-facing; the sequence is RGEQWTPIEP…TPCPVTDEVV (66 aa). Positions 134 to 192 are disordered; it reads IEPKPKERPQVGGTIKQPPSNPPPRPPPEARKKPGEEAVAGVPRGAPRKTPCPVTDEVV. T147 bears the Phosphothreonine mark. Residue K149 forms a Glycyl lysine isopeptide (Lys-Gly) (interchain with G-Cter in ubiquitin) linkage.

The protein belongs to the p22phox family. Component of the phagocyte NADPH oxidase core complex/cytochrome b558 complex, composed of CYBB (heavy chain (beta)) and CYBA (light chain (alpha)). Component of the phagocyte NADPH oxidase complex composed of an obligatory core heterodimer formed by the membrane proteins CYBA and CYBB and the cytosolic regulatory subunits NCF1/p47-phox, NCF2/p67-phox, NCF4/p40-phox and the small GTPase RAC1 or RAC2. Interacts with NCF1 (via SH3 domain). Interacts with SH3PXD2A. Interacts with DUOX1, DUOX2 and TPO. Interacts with NOX4; this interaction mediates superoxide generation. Interacts with calprotectin (S100A8/9). Interacts with GBP7. Interacts with NOXO1. Forms a heterodimer with NOX3 and is essential for activity and cell membrane localization of NOX3. Interacts with NOX1. Post-translationally, phosphorylation at Thr-147 enhances NADPH oxidase activity by promoting NCF1/p47-phox binding. In terms of processing, ubiquitinated at Lys-149 likely by RNF145.

It is found in the cell membrane. Functionally, subunit of NADPH oxidase complexes that is required for the NADPH oxidase activity that generates, in various cell types, superoxide from molecular oxygen utilizing NADPH as an electron donor. Subunit of the phagocyte NADPH oxidase complex that mediates the transfer of electrons from cytosolic NADPH to O2 to produce the superoxide anion (O2(-)). In the activated complex, electrons are first transferred from NADPH to flavin adenine dinucleotide (FAD) and subsequently transferred via two heme molecules to molecular oxygen, producing superoxide through an outer-sphere reaction. Activation of the NADPH oxidase complex is initiated by the assembly of cytosolic subunits of the NADPH oxidase complex with the core NADPH oxidase complex to form a complex at the plasma membrane or phagosomal membrane. This activation process is initiated by phosphorylation dependent binding of the cytosolic NCF1/p47-phox subunit to the C-terminus of CYBA/p22-phox. Aassociates with NOX3 to form a functional NADPH oxidase constitutively generating superoxide. This Sus scrofa (Pig) protein is Cytochrome b-245 light chain.